The chain runs to 361 residues: Nicotinate-nucleotide--dimethylbenzimidazole phosphoribosyltransferase (361 aa).

The active-site Proton acceptor is the Glu-320.

This sequence belongs to the CobT family. As to quaternary structure, homodimer.

The catalysed reaction is 5,6-dimethylbenzimidazole + nicotinate beta-D-ribonucleotide = alpha-ribazole 5'-phosphate + nicotinate + H(+). It functions in the pathway nucleoside biosynthesis; alpha-ribazole biosynthesis; alpha-ribazole from 5,6-dimethylbenzimidazole: step 1/2. Functionally, catalyzes the synthesis of alpha-ribazole-5'-phosphate from nicotinate mononucleotide (NAMN) and 5,6-dimethylbenzimidazole (DMB). The protein is Nicotinate-nucleotide--dimethylbenzimidazole phosphoribosyltransferase of Shigella boydii serotype 18 (strain CDC 3083-94 / BS512).